The following is a 338-amino-acid chain: Ketol-acid reductoisomerase (NADP(+)) (338 aa).

The KARI N-terminal Rossmann domain occupies 1–181 (MKIYYDKDCN…GGGRAGIIET (181 aa)). NADP(+) contacts are provided by residues 24–27 (YGSQ), R47, S50, S52, and 82–85 (DETQ). H107 is an active-site residue. G133 contacts NADP(+). Positions 182-327 (SFKEETETDL…ARLRSMMSWI (146 aa)) constitute a KARI C-terminal knotted domain. Mg(2+) contacts are provided by D190, E194, E226, and E230. Substrate is bound at residue S251.

The protein belongs to the ketol-acid reductoisomerase family. Mg(2+) serves as cofactor.

The catalysed reaction is (2R)-2,3-dihydroxy-3-methylbutanoate + NADP(+) = (2S)-2-acetolactate + NADPH + H(+). It catalyses the reaction (2R,3R)-2,3-dihydroxy-3-methylpentanoate + NADP(+) = (S)-2-ethyl-2-hydroxy-3-oxobutanoate + NADPH + H(+). Its pathway is amino-acid biosynthesis; L-isoleucine biosynthesis; L-isoleucine from 2-oxobutanoate: step 2/4. It functions in the pathway amino-acid biosynthesis; L-valine biosynthesis; L-valine from pyruvate: step 2/4. Functionally, involved in the biosynthesis of branched-chain amino acids (BCAA). Catalyzes an alkyl-migration followed by a ketol-acid reduction of (S)-2-acetolactate (S2AL) to yield (R)-2,3-dihydroxy-isovalerate. In the isomerase reaction, S2AL is rearranged via a Mg-dependent methyl migration to produce 3-hydroxy-3-methyl-2-ketobutyrate (HMKB). In the reductase reaction, this 2-ketoacid undergoes a metal-dependent reduction by NADPH to yield (R)-2,3-dihydroxy-isovalerate. This is Ketol-acid reductoisomerase (NADP(+)) from Geobacter metallireducens (strain ATCC 53774 / DSM 7210 / GS-15).